We begin with the raw amino-acid sequence, 547 residues long: Protein RBL (547 aa).

WD repeat units follow at residues 21–60 (LEHGVIKCVAFNHRGSLLAAGCADGGCVIWDFETRGIAKE), 65–104 (DCSAAITSVSWSKYGHRLLVSAADKSLTLWDVSTGEKIAR), 214–253 (SGAAPVKNIVFSRNGQYLLTNSHDRTIRIYENLLPAKNVL), 285–332 (EFQD…VKIL), and 334–373 (GPKEALIDLAWHPVHPIIVSVSLAGLVYIWAKDYTENWSA). The disordered stretch occupies residues 466-547 (SPASEEAGQN…GGDDDDDAYY (82 aa)). Basic and acidic residues predominate over residues 499–511 (SEKAMELQAEKAK). Positions 530–547 (QETDDSINGGDDDDDAYY) are enriched in acidic residues.

As to quaternary structure, part of a complex composed of TRO, RBL and WDR5A. Interacts with TRO and WDR5A, but not with WDR5B. This complex is formed during both vegetative and reproductive development. In terms of tissue distribution, strongly expressed in root tips, shoot apices, vascular tissues, developing embryos and endosperms.

Its subcellular location is the nucleus. Promotes the expression of FLC and FLC homologs to repress the floral transition. Promotes WRKY70 and LTP7 genes epigenetic methylation (e.g. H3K4me3) and subsequent expression. This is Protein RBL from Arabidopsis thaliana (Mouse-ear cress).